The primary structure comprises 37 residues: Large ribosomal subunit protein bL36c (37 aa).

This sequence belongs to the bacterial ribosomal protein bL36 family.

Its subcellular location is the plastid. The protein localises to the chloroplast. This chain is Large ribosomal subunit protein bL36c, found in Staurastrum punctulatum (Green alga).